The chain runs to 381 residues: 4-hydroxyphenylpyruvate dioxygenase (381 aa).

2 VOC domains span residues 22–156 (GMDA…LVDR) and 184–338 (AIDH…IFTK). Fe cation-binding residues include histidine 187, histidine 270, and glutamate 349.

The protein belongs to the 4HPPD family. In terms of assembly, homodimer. Fe cation serves as cofactor.

It carries out the reaction 3-(4-hydroxyphenyl)pyruvate + O2 = homogentisate + CO2. It functions in the pathway amino-acid degradation; L-phenylalanine degradation; acetoacetate and fumarate from L-phenylalanine: step 3/6. This Streptomyces avermitilis (strain ATCC 31267 / DSM 46492 / JCM 5070 / NBRC 14893 / NCIMB 12804 / NRRL 8165 / MA-4680) protein is 4-hydroxyphenylpyruvate dioxygenase (hpd).